We begin with the raw amino-acid sequence, 453 residues long: D-aminoacyl-tRNA deacylase (453 aa).

The interval 428–453 is disordered; sequence VRADVALHERPRERVRRPSDDEGKGN.

This sequence belongs to the DtdA deacylase family. Monomer. Zn(2+) is required as a cofactor.

The catalysed reaction is a D-aminoacyl-tRNA + H2O = a tRNA + a D-alpha-amino acid + H(+). It catalyses the reaction glycyl-tRNA(Ala) + H2O = tRNA(Ala) + glycine + H(+). D-aminoacyl-tRNA deacylase with broad substrate specificity. By recycling D-aminoacyl-tRNA to D-amino acids and free tRNA molecules, this enzyme counteracts the toxicity associated with the formation of D-aminoacyl-tRNA entities in vivo. In Halobacterium salinarum (strain ATCC 29341 / DSM 671 / R1), this protein is D-aminoacyl-tRNA deacylase.